Reading from the N-terminus, the 172-residue chain is Large ribosomal subunit protein uL10 (172 aa).

Belongs to the universal ribosomal protein uL10 family. As to quaternary structure, part of the ribosomal stalk of the 50S ribosomal subunit. The N-terminus interacts with L11 and the large rRNA to form the base of the stalk. The C-terminus forms an elongated spine to which L12 dimers bind in a sequential fashion forming a multimeric L10(L12)X complex.

Forms part of the ribosomal stalk, playing a central role in the interaction of the ribosome with GTP-bound translation factors. This is Large ribosomal subunit protein uL10 from Rhodopseudomonas palustris (strain HaA2).